The sequence spans 515 residues: MSNDEKQLTKEEMKAIKLQAKEEAKMNDLLKERRQKLSDAQERGKDPFDVYKVERTHTSKQIVDNYDELEDKIVTVAGRLMSKRVHGKAGFSDIYDRYGKIQLYLKIDDVGEEKLKEFKTFDIGDFVVITGKVFKTKTGEITLHVTKLELIAKSLKPLPEKFHGLKDPDLKYRQRYVDLIINQDVRETFMKRTAIIKAVREFLDNKDYLEVETPVLSTIASGASARPFSTHHNALDLDMHLRIATELYLKRLIVGGFEKVYEIGKDFRNEGIDVRHNPEFTMIELYEAYADYNDMMEITENMVAYACQKVNGTTKITYEGTEIDLTPPWRRVTMVDIVKEHSGIDFSTVKTDEEAREIAKEKKLELKKELKDCTKGDILNALFEEYGEKKLIQPTFVCDYPVEISPLTKKKRGNPEYTERFEGFIYGREICNAYSELNDPIVQKDRFMQQLKERELGDDEAYQMDDDFINALEIGMPPTGGMGMGMDRLVMFLTDSPSIRDVILFPTMKPTPNRD.

Glu422 and Glu429 together coordinate Mg(2+).

The protein belongs to the class-II aminoacyl-tRNA synthetase family. As to quaternary structure, homodimer. It depends on Mg(2+) as a cofactor.

It localises to the cytoplasm. It catalyses the reaction tRNA(Lys) + L-lysine + ATP = L-lysyl-tRNA(Lys) + AMP + diphosphate. In Clostridium acetobutylicum (strain ATCC 824 / DSM 792 / JCM 1419 / IAM 19013 / LMG 5710 / NBRC 13948 / NRRL B-527 / VKM B-1787 / 2291 / W), this protein is Lysine--tRNA ligase.